Reading from the N-terminus, the 359-residue chain is 3-dehydroquinate synthase (359 aa).

It belongs to the archaeal-type DHQ synthase family.

It carries out the reaction 2-amino-2,3,7-trideoxy-D-lyxo-hept-6-ulosonate + NAD(+) + H2O = 3-dehydroquinate + NH4(+) + NADH + H(+). In terms of biological role, catalyzes the oxidative deamination and cyclization of 2-amino-3,7-dideoxy-D-threo-hept-6-ulosonic acid (ADH) to yield 3-dehydroquinate (DHQ), which is fed into the canonical shikimic pathway of aromatic amino acid biosynthesis. The sequence is that of 3-dehydroquinate synthase from Methanosphaera stadtmanae (strain ATCC 43021 / DSM 3091 / JCM 11832 / MCB-3).